Here is a 294-residue protein sequence, read N- to C-terminus: 4-hydroxy-tetrahydrodipicolinate synthase (294 aa).

Threonine 45 lines the pyruvate pocket. The active-site Proton donor/acceptor is tyrosine 133. Lysine 161 serves as the catalytic Schiff-base intermediate with substrate. Isoleucine 203 provides a ligand contact to pyruvate.

This sequence belongs to the DapA family. Homotetramer; dimer of dimers.

It is found in the cytoplasm. The enzyme catalyses L-aspartate 4-semialdehyde + pyruvate = (2S,4S)-4-hydroxy-2,3,4,5-tetrahydrodipicolinate + H2O + H(+). The protein operates within amino-acid biosynthesis; L-lysine biosynthesis via DAP pathway; (S)-tetrahydrodipicolinate from L-aspartate: step 3/4. Functionally, catalyzes the condensation of (S)-aspartate-beta-semialdehyde [(S)-ASA] and pyruvate to 4-hydroxy-tetrahydrodipicolinate (HTPA). The chain is 4-hydroxy-tetrahydrodipicolinate synthase from Shewanella pealeana (strain ATCC 700345 / ANG-SQ1).